The sequence spans 457 residues: Heme sensor protein HssS (457 aa).

2 helical membrane passes run isoleucine 9–asparagine 29 and threonine 164–serine 184. The region spanning tyrosine 186 to glutamine 238 is the HAMP domain. In terms of domain architecture, Histidine kinase spans asparagine 246–serine 456. Residue histidine 249 is modified to Phosphohistidine; by autocatalysis.

Post-translationally, autophosphorylated.

It localises to the cell membrane. The enzyme catalyses ATP + protein L-histidine = ADP + protein N-phospho-L-histidine.. In terms of biological role, member of the two-component regulatory system HssS/HssR involved in intracellular heme homeostasis and tempering of staphylococcal virulence. HssS functions as a heme sensor histidine kinase which is autophosphorylated at a histidine residue and transfers its phosphate group to an aspartate residue of HssR. HssR/HssS activates the expression of hrtAB, an efflux pump, in response to extracellular heme, hemin, hemoglobin or blood. The polypeptide is Heme sensor protein HssS (hssS) (Staphylococcus aureus (strain Mu3 / ATCC 700698)).